The sequence spans 165 residues: Phosphopantetheine adenylyltransferase (165 aa).

S9 is a substrate binding site. ATP is bound by residues 9 to 10 (SF) and H17. Substrate-binding residues include K41, I75, and R89. Residues 90–92 (GVR), E100, and 125–131 (YLFVRSD) each bind ATP.

The protein belongs to the bacterial CoaD family. As to quaternary structure, homohexamer. The cofactor is Mg(2+).

It is found in the cytoplasm. It carries out the reaction (R)-4'-phosphopantetheine + ATP + H(+) = 3'-dephospho-CoA + diphosphate. It participates in cofactor biosynthesis; coenzyme A biosynthesis; CoA from (R)-pantothenate: step 4/5. In terms of biological role, reversibly transfers an adenylyl group from ATP to 4'-phosphopantetheine, yielding dephospho-CoA (dPCoA) and pyrophosphate. This is Phosphopantetheine adenylyltransferase from Borrelia hermsii (strain HS1 / DAH).